A 498-amino-acid chain; its full sequence is Glutamate--tRNA ligase (498 aa).

Positions 11-21 (PSPTGHLHIGN) match the 'HIGH' region motif. A 'KMSKS' region motif is present at residues 260-264 (KLSKR). Lys-263 is a binding site for ATP.

The protein belongs to the class-I aminoacyl-tRNA synthetase family. Glutamate--tRNA ligase type 1 subfamily. In terms of assembly, monomer.

It is found in the cytoplasm. The enzyme catalyses tRNA(Glu) + L-glutamate + ATP = L-glutamyl-tRNA(Glu) + AMP + diphosphate. In terms of biological role, catalyzes the attachment of glutamate to tRNA(Glu) in a two-step reaction: glutamate is first activated by ATP to form Glu-AMP and then transferred to the acceptor end of tRNA(Glu). In Leuconostoc citreum (strain KM20), this protein is Glutamate--tRNA ligase.